The primary structure comprises 595 residues: MRETLEALSSLGFSVGQPEMAPQSEPREGSHNAQEQMSSSREERALGVCSGHEAPTPEEGAHTEQAEAPCRGQACSAQKAQPVGTCPGEEWMIRKVKVEDEDQEAEEEVEWPQHLSLLPSPFPAPDLGHLAAAYKLEPGAPGALSGLALSGWGPMPEKPYGCGECERRFRDQLTLRLHQRLHRGEGPCACPDCGRSFTQRAHMLLHQRSHRGERPFPCSECDKRFSKKAHLTRHLRTHTGERPYPCAECGKRFSQKIHLGSHQKTHTGERPFPCTECEKRFRKKTHLIRHQRIHTGERPYQCAQCARSFTHKQHLVRHQRVHQTAGPARPSPDSSASPHSTAPSPTPSFPGPKPFACSDCGLSFGWKKNLATHQCLHRSEGRPFGCDECALGATVDAPAAKPLASAPGGPGCGPGSDPVVPQRAPSGERSFFCPDCGRGFSHGQHLARHPRVHTGERPFACTQCDRRFGSRPNLVAHSRAHSGARPFACAQCGRRFSRKSHLGRHQAVHTGSRPHACAVCARSFSSKTNLVRHQAIHTGSRPFSCPQCGKSFSRKTHLVRHQLIHGEAAHAAPDAALAAPAWSAPPEVAPPPLFF.

Positions 1-67 (MRETLEALSS…EEGAHTEQAE (67 aa)) are disordered. K97 is covalently cross-linked (Glycyl lysine isopeptide (Lys-Gly) (interchain with G-Cter in SUMO2)). 6 C2H2-type zinc fingers span residues 160–182 (YGCG…QRLH), 188–210 (CACP…QRSH), 216–238 (FPCS…LRTH), 244–266 (YPCA…QKTH), 272–294 (FPCT…QRIH), and 300–322 (YQCA…QRVH). The segment at 313-350 (QHLVRHQRVHQTAGPARPSPDSSASPHSTAPSPTPSFP) is disordered. A compositionally biased stretch (low complexity) spans 325–343 (AGPARPSPDSSASPHSTAP). 6 C2H2-type zinc fingers span residues 355-377 (FACS…QCLH), 431-453 (FFCP…PRVH), 459-481 (FACT…SRAH), 487-509 (FACA…QAVH), 515-537 (HACA…QAIH), and 543-565 (FSCP…QLIH). A Glycyl lysine isopeptide (Lys-Gly) (interchain with G-Cter in SUMO2) cross-link involves residue K368.

It belongs to the krueppel C2H2-type zinc-finger protein family. As to quaternary structure, interacts with STAT3. Enhances STAT3 activity by keeping it in the nucleus.

Its subcellular location is the nucleus. Functionally, transcription factor that promotes adipocyte differentiation and suppresses osteoblast differentiation in the bone marrow. Enhances the osteoclast-supporting ability of stromal cells. Binds with STAT3 the consensus sequence 5'-CTTCTGGGAAGA-3' of the acute phase response element (APRE). Transactivates several promoters including FOS, OSM and PPARG. Recruits a histone deacetylase complex. This Homo sapiens (Human) protein is Zinc finger protein 467 (ZNF467).